Here is a 353-residue protein sequence, read N- to C-terminus: MSFDIKWENLTVDNTINESIQSFLDEQFKKLSLPSYISNLSVTDFQLGEIPPEITIRHIGDPFDEFYEDTTDSPETEQPKEEYTGDDDDDDDDDEDDESDDDGPGLSTISEGIHLLNFNRTGSPLPDATPLSPRPMNRSRDSFQSILHPFGVNIGPTGSETPTNLLNQSYFSSRRVSIKQKQPLYDENDIQLIVEFNYKGNLHMNILVNLLVNYPSPNFISLPIKLHITDIEIHSIATIAYLKKAVFLSFLCDVNDETIPEFNNSQSIEYYTKNNPIDIIKKIKIESEIGEVESNILRNVGKVERFLVEQLRNILREELAWPSWICLDMNDDDEEEEEEENPSESSSTTHVGS.

The SMP-LTD domain occupies 1-330; the sequence is MSFDIKWENL…WPSWICLDMN (330 aa). Acidic residues-rich tracts occupy residues 64–75, 84–103, and 330–342; these read DEFYEDTTDSPE, TGDD…DDDG, and NDDD…EENP. Disordered regions lie at residues 64–140 and 330–353; these read DEFY…NRSR and NDDD…HVGS.

The protein belongs to the MDM12 family. Component of the ER-mitochondria encounter structure (ERMES) or MDM complex, composed of MMM1, MDM10, MDM12 and MDM34. An MMM1 homodimer associates with one molecule of MDM12 on each side in a pairwise head-to-tail manner, and the SMP-LTD domains of MMM1 and MDM12 generate a continuous hydrophobic tunnel for phospholipid trafficking.

The protein localises to the mitochondrion outer membrane. Its subcellular location is the endoplasmic reticulum membrane. Functionally, component of the ERMES/MDM complex, which serves as a molecular tether to connect the endoplasmic reticulum (ER) and mitochondria. Components of this complex are involved in the control of mitochondrial shape and protein biogenesis, and function in nonvesicular lipid trafficking between the ER and mitochondria. MDM12 is required for the interaction of the ER-resident membrane protein MMM1 and the outer mitochondrial membrane-resident beta-barrel protein MDM10. The MDM12-MMM1 subcomplex functions in the major beta-barrel assembly pathway that is responsible for biogenesis of all mitochondrial outer membrane beta-barrel proteins, and acts in a late step after the SAM complex. The MDM10-MDM12-MMM1 subcomplex further acts in the TOM40-specific pathway after the action of the MDM12-MMM1 complex. Essential for establishing and maintaining the structure of mitochondria and maintenance of mtDNA nucleoids. The polypeptide is Mitochondrial distribution and morphology protein 12 (Candida tropicalis (strain ATCC MYA-3404 / T1) (Yeast)).